The following is a 224-amino-acid chain: UPF0758 protein Csal_2972 (224 aa).

In terms of domain architecture, MPN spans 102-224 (ALTSPTLVRR…VVSFAERGWL (123 aa)). Residues His173, His175, and Asp186 each coordinate Zn(2+). Positions 173–186 (HNHPSGVAEPSDAD) match the JAMM motif motif.

It belongs to the UPF0758 family.

This chain is UPF0758 protein Csal_2972, found in Chromohalobacter salexigens (strain ATCC BAA-138 / DSM 3043 / CIP 106854 / NCIMB 13768 / 1H11).